Consider the following 691-residue polypeptide: Methionine--tRNA ligase (691 aa).

A 'HIGH' region motif is present at residues 15–25 (PYTNGPIHIGH). 4 residues coordinate Zn(2+): Cys147, Cys150, Cys160, and Cys163. The 'KMSKS' region motif lies at 336–340 (KLSTS). Position 339 (Thr339) interacts with ATP. In terms of domain architecture, tRNA-binding spans 589–691 (DFTKMDLRVG…DGVKAGTTIN (103 aa)).

It belongs to the class-I aminoacyl-tRNA synthetase family. MetG type 1 subfamily. As to quaternary structure, homodimer. It depends on Zn(2+) as a cofactor.

The protein localises to the cytoplasm. It catalyses the reaction tRNA(Met) + L-methionine + ATP = L-methionyl-tRNA(Met) + AMP + diphosphate. Is required not only for elongation of protein synthesis but also for the initiation of all mRNA translation through initiator tRNA(fMet) aminoacylation. In Christiangramia forsetii (strain DSM 17595 / CGMCC 1.15422 / KT0803) (Gramella forsetii), this protein is Methionine--tRNA ligase.